The primary structure comprises 251 residues: Hydroxyacylglutathione hydrolase (251 aa).

Zn(2+)-binding residues include His53, His55, Asp57, His58, His110, Asp127, and His165.

Belongs to the metallo-beta-lactamase superfamily. Glyoxalase II family. In terms of assembly, monomer. Zn(2+) is required as a cofactor.

The enzyme catalyses an S-(2-hydroxyacyl)glutathione + H2O = a 2-hydroxy carboxylate + glutathione + H(+). Its pathway is secondary metabolite metabolism; methylglyoxal degradation; (R)-lactate from methylglyoxal: step 2/2. Its function is as follows. Thiolesterase that catalyzes the hydrolysis of S-D-lactoyl-glutathione to form glutathione and D-lactic acid. The sequence is that of Hydroxyacylglutathione hydrolase from Pectobacterium carotovorum subsp. carotovorum (strain PC1).